A 619-amino-acid chain; its full sequence is Dihydroxy-acid dehydratase 1 (619 aa).

Residue Asp-81 coordinates Mg(2+). Cys-122 is a binding site for [2Fe-2S] cluster. Mg(2+) is bound by residues Asp-123 and Lys-124. The residue at position 124 (Lys-124) is an N6-carboxylysine. Residue Cys-198 participates in [2Fe-2S] cluster binding. Glu-494 is a Mg(2+) binding site. Ser-520 serves as the catalytic Proton acceptor.

Belongs to the IlvD/Edd family. In terms of assembly, homodimer. It depends on [2Fe-2S] cluster as a cofactor. The cofactor is Mg(2+).

It catalyses the reaction (2R)-2,3-dihydroxy-3-methylbutanoate = 3-methyl-2-oxobutanoate + H2O. The catalysed reaction is (2R,3R)-2,3-dihydroxy-3-methylpentanoate = (S)-3-methyl-2-oxopentanoate + H2O. Its pathway is amino-acid biosynthesis; L-isoleucine biosynthesis; L-isoleucine from 2-oxobutanoate: step 3/4. The protein operates within amino-acid biosynthesis; L-valine biosynthesis; L-valine from pyruvate: step 3/4. Functions in the biosynthesis of branched-chain amino acids. Catalyzes the dehydration of (2R,3R)-2,3-dihydroxy-3-methylpentanoate (2,3-dihydroxy-3-methylvalerate) into 2-oxo-3-methylpentanoate (2-oxo-3-methylvalerate) and of (2R)-2,3-dihydroxy-3-methylbutanoate (2,3-dihydroxyisovalerate) into 2-oxo-3-methylbutanoate (2-oxoisovalerate), the penultimate precursor to L-isoleucine and L-valine, respectively. The protein is Dihydroxy-acid dehydratase 1 of Bordetella pertussis (strain Tohama I / ATCC BAA-589 / NCTC 13251).